The chain runs to 473 residues: Dolichyl-diphosphooligosaccharide--protein glycosyltransferase subunit 1B (473 aa).

Positions 1–27 (MAPSLSTAVSSLLLLLLLAAAISVSSS) are cleaved as a signal peptide. Topologically, residues 28 to 439 (PPMPEDSIRV…PFQVYYEFNP (412 aa)) are lumenal. Asn-307 and Asn-361 each carry an N-linked (GlcNAc...) asparagine glycan. Residues 440 to 460 (IFMLAEPLMLISAVFLFFVAC) form a helical membrane-spanning segment. Residues 461–473 (IAYLHMDLSIGKS) are Cytoplasmic-facing.

Belongs to the OST1 family. In terms of assembly, component of the oligosaccharyltransferase (OST) complex.

It localises to the endoplasmic reticulum membrane. The protein operates within protein modification; protein glycosylation. Its function is as follows. Subunit of the oligosaccharyl transferase (OST) complex that catalyzes the initial transfer of a defined glycan (Glc(3)Man(9)GlcNAc(2) in eukaryotes) from the lipid carrier dolichol-pyrophosphate to an asparagine residue within an Asn-X-Ser/Thr consensus motif in nascent polypeptide chains, the first step in protein N-glycosylation. N-glycosylation occurs cotranslationally and the complex associates with the Sec61 complex at the channel-forming translocon complex that mediates protein translocation across the endoplasmic reticulum (ER). All subunits are required for a maximal enzyme activity. This chain is Dolichyl-diphosphooligosaccharide--protein glycosyltransferase subunit 1B (OST1B), found in Oryza sativa subsp. japonica (Rice).